The sequence spans 140 residues: Putative cell wall protein (140 aa).

Residues 1–21 (MASSLITSAVIVVVLSLVLGS) form the signal peptide. A compositionally biased stretch (gly residues) spans 85-98 (TGGGIPSYNGGQGA). Residues 85–140 (TGGGIPSYNGGQGAGPHTQLPGGDDTLVPNPGFEAPTPTIGAGTGSNGQVPPVPLP) form a disordered region.

As to expression, inflorescence.

Its subcellular location is the secreted. It is found in the cell wall. The sequence is that of Putative cell wall protein from Arabidopsis thaliana (Mouse-ear cress).